The following is a 350-amino-acid chain: Methionine import ATP-binding protein MetN (350 aa).

Residues I2–I242 enclose the ABC transporter domain. G39–S46 serves as a coordination point for ATP.

Belongs to the ABC transporter superfamily. Methionine importer (TC 3.A.1.24) family. As to quaternary structure, the complex is composed of two ATP-binding proteins (MetN), two transmembrane proteins (MetI) and a solute-binding protein (MetQ).

The protein localises to the cell inner membrane. It catalyses the reaction L-methionine(out) + ATP + H2O = L-methionine(in) + ADP + phosphate + H(+). The enzyme catalyses D-methionine(out) + ATP + H2O = D-methionine(in) + ADP + phosphate + H(+). Its function is as follows. Part of the ABC transporter complex MetNIQ involved in methionine import. Responsible for energy coupling to the transport system. The chain is Methionine import ATP-binding protein MetN from Ralstonia nicotianae (strain ATCC BAA-1114 / GMI1000) (Ralstonia solanacearum).